Consider the following 319-residue polypeptide: Geranylgeranyl pyrophosphate synthase (319 aa).

Isopentenyl diphosphate-binding residues include Lys-42, Arg-45, and His-74. Residues Asp-81 and Asp-85 each contribute to the Mg(2+) site. Arg-90 is a dimethylallyl diphosphate binding site. Position 91 (Arg-91) interacts with isopentenyl diphosphate. Positions 172, 173, 210, 226, and 236 each coordinate dimethylallyl diphosphate.

This sequence belongs to the FPP/GGPP synthase family. Homodimer. Mg(2+) is required as a cofactor.

It carries out the reaction isopentenyl diphosphate + dimethylallyl diphosphate = (2E)-geranyl diphosphate + diphosphate. The enzyme catalyses isopentenyl diphosphate + (2E)-geranyl diphosphate = (2E,6E)-farnesyl diphosphate + diphosphate. It catalyses the reaction isopentenyl diphosphate + (2E,6E)-farnesyl diphosphate = (2E,6E,10E)-geranylgeranyl diphosphate + diphosphate. It participates in isoprenoid biosynthesis; geranyl diphosphate biosynthesis; geranyl diphosphate from dimethylallyl diphosphate and isopentenyl diphosphate: step 1/1. Its pathway is isoprenoid biosynthesis; farnesyl diphosphate biosynthesis; farnesyl diphosphate from geranyl diphosphate and isopentenyl diphosphate: step 1/1. The protein operates within isoprenoid biosynthesis; geranylgeranyl diphosphate biosynthesis; geranylgeranyl diphosphate from farnesyl diphosphate and isopentenyl diphosphate: step 1/1. Its function is as follows. Catalyzes the addition of 3 molecules of isopentenyl diphosphate (IPP) onto dimethylallyl diphosphate (DMAPP) to form geranylgeranyl pyrophosphate (GGPP). Catalyzes the synthesis of geranylgeranyl pyrophosphate as a major product and of farnesyl pyrophosphate in smaller amounts. This Geoglobus acetivorans protein is Geranylgeranyl pyrophosphate synthase.